Here is a 171-residue protein sequence, read N- to C-terminus: 3-hydroxydecanoyl-[acyl-carrier-protein] dehydratase (171 aa).

H70 is an active-site residue.

This sequence belongs to the thioester dehydratase family. FabA subfamily. In terms of assembly, homodimer.

The protein resides in the cytoplasm. The catalysed reaction is a (3R)-hydroxyacyl-[ACP] = a (2E)-enoyl-[ACP] + H2O. The enzyme catalyses (3R)-hydroxydecanoyl-[ACP] = (2E)-decenoyl-[ACP] + H2O. It carries out the reaction (2E)-decenoyl-[ACP] = (3Z)-decenoyl-[ACP]. Its pathway is lipid metabolism; fatty acid biosynthesis. Its function is as follows. Necessary for the introduction of cis unsaturation into fatty acids. Catalyzes the dehydration of (3R)-3-hydroxydecanoyl-ACP to E-(2)-decenoyl-ACP and then its isomerization to Z-(3)-decenoyl-ACP. Can catalyze the dehydratase reaction for beta-hydroxyacyl-ACPs with saturated chain lengths up to 16:0, being most active on intermediate chain length. This chain is 3-hydroxydecanoyl-[acyl-carrier-protein] dehydratase, found in Stutzerimonas stutzeri (strain A1501) (Pseudomonas stutzeri).